We begin with the raw amino-acid sequence, 70 residues long: Bowman-Birk type proteinase inhibitor A-II (70 aa).

7 disulfides stabilise this stretch: Cys-11–Cys-68, Cys-12–Cys-29, Cys-15–Cys-63, Cys-17–Cys-27, Cys-36–Cys-43, Cys-40–Cys-55, and Cys-45–Cys-53.

This sequence belongs to the Bowman-Birk serine protease inhibitor family.

These proteins inhibit trypsin and chymotrypsin, having 2 sites of interaction with trypsin. The site of interaction with chymotrypsin has not been determined but is not independent of the trypsin-reactive sites. This Arachis hypogaea (Peanut) protein is Bowman-Birk type proteinase inhibitor A-II.